We begin with the raw amino-acid sequence, 576 residues long: Putative diflavin flavoprotein A 1 (576 aa).

Residues 48-240 form a zinc metallo-hydrolase region; it reads RNGTTYNSFL…LAIKTVATGH (193 aa). Fe cation is bound by residues H97, E99, D101, H164, D183, and H240. Residues 269-431 enclose the Flavodoxin-like domain; the sequence is VALFYAEDYG…DLEKALGRIS (163 aa). The interval 432–576 is flavodoxin-reductase-like; that stretch reads TGLYIITTKK…VHHRKVGNHY (145 aa).

In the N-terminal section; belongs to the zinc metallo-hydrolase group 3 family. This sequence in the C-terminal section; belongs to the flavodoxin reductase family. Requires Fe cation as cofactor.

Mediates electron transfer from NADH to oxygen, reducing it to water. This modular protein has 3 redox cofactors, in other organisms the same activity requires 2 or 3 proteins. This Nostoc sp. (strain PCC 7120 / SAG 25.82 / UTEX 2576) protein is Putative diflavin flavoprotein A 1 (dfa1).